The sequence spans 348 residues: Nicotinate-nucleotide--dimethylbenzimidazole phosphoribosyltransferase (348 aa).

The Proton acceptor role is filled by E315.

Belongs to the CobT family.

The catalysed reaction is 5,6-dimethylbenzimidazole + nicotinate beta-D-ribonucleotide = alpha-ribazole 5'-phosphate + nicotinate + H(+). The protein operates within nucleoside biosynthesis; alpha-ribazole biosynthesis; alpha-ribazole from 5,6-dimethylbenzimidazole: step 1/2. Functionally, catalyzes the synthesis of alpha-ribazole-5'-phosphate from nicotinate mononucleotide (NAMN) and 5,6-dimethylbenzimidazole (DMB). The protein is Nicotinate-nucleotide--dimethylbenzimidazole phosphoribosyltransferase of Dechloromonas aromatica (strain RCB).